Consider the following 346-residue polypeptide: GTPase Obg (346 aa).

In terms of domain architecture, Obg spans 1–158 (MFIDKAKIYV…RWIELELKLL (158 aa)). Positions 159–330 (ADVGIIGFPN…LINLIRETRD (172 aa)) constitute an OBG-type G domain. Residues 165 to 172 (GFPNAGKS), 190 to 194 (FTTLT), 212 to 215 (DIPG), 282 to 285 (NKID), and 311 to 313 (SLI) each bind GTP. Mg(2+)-binding residues include Ser172 and Thr192.

Belongs to the TRAFAC class OBG-HflX-like GTPase superfamily. OBG GTPase family. As to quaternary structure, monomer. Requires Mg(2+) as cofactor.

The protein resides in the cytoplasm. In terms of biological role, an essential GTPase which binds GTP, GDP and possibly (p)ppGpp with moderate affinity, with high nucleotide exchange rates and a fairly low GTP hydrolysis rate. Plays a role in control of the cell cycle, stress response, ribosome biogenesis and in those bacteria that undergo differentiation, in morphogenesis control. In Sulfurihydrogenibium sp. (strain YO3AOP1), this protein is GTPase Obg.